The chain runs to 708 residues: Lactotransferrin (708 aa).

Positions 1-19 are cleaved as a signal peptide; the sequence is MKLLFLALLSLLALGPSLA. 2 consecutive Transferrin-like domains span residues 25-352 and 364-693; these read VRWC…NLKE and VVWC…NLRQ. 2 disulfide bridges follow: cysteine 28–cysteine 64 and cysteine 38–cysteine 55. Aspartate 79 provides a ligand contact to Fe(3+). Arginine 92 is an active-site residue. Tyrosine 111 is a Fe(3+) binding site. Intrachain disulfides connect cysteine 134-cysteine 217, cysteine 176-cysteine 192, cysteine 179-cysteine 202, cysteine 189-cysteine 200, and cysteine 250-cysteine 264. Threonine 136 contacts hydrogencarbonate. N-linked (GlcNAc...) asparagine glycosylation is present at asparagine 139. 3 residues coordinate hydrogencarbonate: arginine 140, alanine 142, and glycine 143. Residue tyrosine 211 participates in Fe(3+) binding. Histidine 272 contributes to the Fe(3+) binding site. Serine 278 acts as the Nucleophile in catalysis. Cystine bridges form between cysteine 367–cysteine 399 and cysteine 377–cysteine 390. A glycan (N-linked (GlcNAc...) asparagine) is linked at asparagine 385. Aspartate 414 and aspartate 452 together coordinate Fe(3+). Intrachain disulfides connect cysteine 476/cysteine 551, cysteine 510/cysteine 524, cysteine 521/cysteine 534, and cysteine 592/cysteine 606. The hydrogencarbonate site is built by threonine 478, arginine 482, alanine 484, and glycine 485. The N-linked (GlcNAc...) asparagine glycan is linked to asparagine 495. Tyrosine 545 is a binding site for Fe(3+). Residue histidine 614 coordinates Fe(3+).

It belongs to the transferrin family. As to quaternary structure, monomer. Found in a complex with LTF, CLU, EPPIN and SEMG1. Interacts with prey activated coagulation factor X; the interaction inhibits coagulation factor X catalytic activity. Found in a complex with MPO and LTF; interacts directly with CP, allows Fe(3+) incorporation into LTF and activation of CP ferroxidase activity. Post-translationally, N-glycosylated. Glycosylation is important for draculin anticoagulant activity. Probably also O-glycosylated. Expressed in the submaxillary gland and secreted in the saliva (at protein level).

It localises to the secreted. Functionally, transferrins are iron binding transport proteins which can bind two Fe(3+) ions in association with the binding of an anion, usually bicarbonate. Major iron-binding and multifunctional protein found in exocrine fluids such as breast milk and mucosal secretions. Has antimicrobial activity. Antimicrobial properties may include bacteriostasis, which is related to its ability to sequester free iron and thus inhibit microbial growth, as well as direct bactericidal properties leading to the release of lipopolysaccharides from the bacterial outer membrane. May have anabolic, differentiating and anti-apoptotic effects on osteoblasts and may also inhibit osteoclastogenesis, possibly playing a role in the regulation of bone growth. May interfere with the lipopolysaccharide (LPS)-stimulated TLR4 signaling. Its function is as follows. The lactotransferrin transferrin-like domain 1 functions as a serine protease of the peptidase S60 family that cuts arginine rich regions. This function contributes to the antimicrobial activity. Shows a preferential cleavage at -Arg-Ser-Arg-Arg-|- and -Arg-Arg-Ser-Arg-|-, and of Z-Phe-Arg-|-aminomethylcoumarin sites. In terms of biological role, acts as an anticoagulant of the blood coagulation cascade of the bat's prey by inhibiting coagulation factor IX and activated coagulation factor X. This Desmodus rotundus (Vampire bat) protein is Lactotransferrin.